A 533-amino-acid chain; its full sequence is DNA-directed RNA polymerase III subunit RPC3 (533 aa).

Residues 162-181 (LVPDTDSSDRGPPPPAPTLV) are disordered. Serine 194 is subject to Phosphoserine. The disordered stretch occupies residues 197-228 (GKGKRRRSSDEDATGEPKAKKPRYTDNKEPSP). The segment covering 211-227 (GEPKAKKPRYTDNKEPS) has biased composition (basic and acidic residues).

Belongs to the eukaryotic RPC3/POLR3C RNA polymerase subunit family. Component of the RNA polymerase III complex consisting of 17 subunits: a ten-subunit horseshoe-shaped catalytic core composed of POLR3A/RPC1, POLR3B/RPC2, POLR1C/RPAC1, POLR1D/RPAC2, POLR3K/RPC10, POLR2E/RPABC1, POLR2F/RPABC2, POLR2H/RPABC3, POLR2K/RPABC4 and POLR2L/RPABC5; a mobile stalk composed of two subunits POLR3H/RPC8 and CRCP/RPC9, protruding from the core and functioning primarily in transcription initiation; and additional subunits homologous to general transcription factors of the RNA polymerase II machinery, POLR3C/RPC3-POLR3F/RPC6-POLR3G/RPC7 heterotrimer required for transcription initiation and POLR3D/RPC4-POLR3E/RPC5 heterodimer involved in both transcription initiation and termination. Directly interacts with POLR3G/RPC7 and POLR3GL. Directly interacts with POLR3F/RPC6. Interacts with GTF3C4. As part of the RNA polymerase III complex, interacts with PKP2.

It is found in the nucleus. In terms of biological role, DNA-dependent RNA polymerase catalyzes the transcription of DNA into RNA using the four ribonucleoside triphosphates as substrates. Specific peripheric component of RNA polymerase III (Pol III) which synthesizes small non-coding RNAs including 5S rRNA, snRNAs, tRNAs and miRNAs from at least 500 distinct genomic loci. Part of POLR3C/RPC3-POLR3F/RPC6-POLR3G/RPC7 heterotrimer, coordinates the dynamics of Pol III stalk and clamp modules during the transition from apo to elongation state. Pol III plays a key role in sensing and limiting infection by intracellular bacteria and DNA viruses. Acts as a nuclear and cytosolic DNA sensor involved in innate immune response. Can sense non-self dsDNA that serves as template for transcription into dsRNA. The non-self RNA polymerase III transcripts, such as Epstein-Barr virus-encoded RNAs (EBERs) induce type I interferon and NF-kappa-B through the RIG-I pathway. Preferentially binds single-stranded DNA (ssDNA) in a sequence-independent manner. The polypeptide is DNA-directed RNA polymerase III subunit RPC3 (Mus musculus (Mouse)).